A 284-amino-acid polypeptide reads, in one-letter code: Polyamine aminopropyltransferase (284 aa).

The PABS domain occupies 2–237 (ELWYTEKHTE…GHWLFGFASK (236 aa)). Glutamine 31 serves as a coordination point for S-methyl-5'-thioadenosine. Spermidine contacts are provided by histidine 62 and aspartate 86. Residues glutamate 106 and 137-138 (DG) contribute to the S-methyl-5'-thioadenosine site. The active-site Proton acceptor is aspartate 155. Residue 155–158 (DSTD) coordinates spermidine. Position 162 (proline 162) interacts with S-methyl-5'-thioadenosine.

Belongs to the spermidine/spermine synthase family. Homodimer or homotetramer.

It is found in the cytoplasm. The enzyme catalyses S-adenosyl 3-(methylsulfanyl)propylamine + putrescine = S-methyl-5'-thioadenosine + spermidine + H(+). The protein operates within amine and polyamine biosynthesis; spermidine biosynthesis; spermidine from putrescine: step 1/1. Its function is as follows. Catalyzes the irreversible transfer of a propylamine group from the amino donor S-adenosylmethioninamine (decarboxy-AdoMet) to putrescine (1,4-diaminobutane) to yield spermidine. This Clostridium botulinum (strain Alaska E43 / Type E3) protein is Polyamine aminopropyltransferase.